We begin with the raw amino-acid sequence, 369 residues long: Phospho-N-acetylmuramoyl-pentapeptide-transferase (369 aa).

Transmembrane regions (helical) follow at residues 2–22 (IALL…TPLF), 55–75 (TVVV…MWMM), 86–106 (ALLL…DDFI), 122–142 (LVLQ…FPNA), 158–178 (IPWL…FVLW), 196–216 (LDGL…LMGI), 239–259 (PLDL…FLWW), 266–286 (IFMG…FAIL), 291–311 (LLLA…IIQV), and 348–368 (ILGG…WVVL).

Belongs to the glycosyltransferase 4 family. MraY subfamily. Mg(2+) is required as a cofactor.

It localises to the cell membrane. The catalysed reaction is UDP-N-acetyl-alpha-D-muramoyl-L-alanyl-gamma-D-glutamyl-meso-2,6-diaminopimeloyl-D-alanyl-D-alanine + di-trans,octa-cis-undecaprenyl phosphate = di-trans,octa-cis-undecaprenyl diphospho-N-acetyl-alpha-D-muramoyl-L-alanyl-D-glutamyl-meso-2,6-diaminopimeloyl-D-alanyl-D-alanine + UMP. It participates in cell wall biogenesis; peptidoglycan biosynthesis. Its function is as follows. Catalyzes the initial step of the lipid cycle reactions in the biosynthesis of the cell wall peptidoglycan: transfers peptidoglycan precursor phospho-MurNAc-pentapeptide from UDP-MurNAc-pentapeptide onto the lipid carrier undecaprenyl phosphate, yielding undecaprenyl-pyrophosphoryl-MurNAc-pentapeptide, known as lipid I. The polypeptide is Phospho-N-acetylmuramoyl-pentapeptide-transferase (Arthrobacter sp. (strain FB24)).